The sequence spans 462 residues: MKPNIIFVLSLLLILEKQAAVMGQKGGSKGRLPSEFSQFPHGQKGQHYSGQKGKQQTESKGSFSIQYTYHVDANDHDQSRKSQQYDLNALHKTTKSQRHLGGSQQLLHNKQEGRDHDKSKGHFHRVVIHHKGGKAHRGTQNPSQDQGNSPSGKGISSQYSNTEERLWVHGLSKEQTSVSGAQKGRKQGGSQSSYVLQTEELVANKQQRETKNSHQNKGHYQNVVEVREEHSSKVQTSLCPAHQDKLQHGSKDIFSTQDELLVYNKNQHQTKNLNQDQQHGRKANKISYQSSSTEERRLHYGENGVQKDVSQSSIYSQTEEKAQGKSQKQITIPSQEQEHSQKANKISYQSSSTEERRLHYGENGVQKDVSQRSIYSQTEKLVAGKSQIQAPNPKQEPWHGENAKGESGQSTNREQDLLSHEQKGRHQHGSHGGLDIVIIEQEDDSDRHLAQHLNNDRNPLFT.

Residues 1-23 form the signal peptide; it reads MKPNIIFVLSLLLILEKQAAVMG. Pyrrolidone carboxylic acid is present on Gln-24. Positions 24-61 are disordered; that stretch reads QKGGSKGRLPSEFSQFPHGQKGQHYSGQKGKQQTESKG. Over residues 46–61 the composition is skewed to polar residues; sequence QHYSGQKGKQQTESKG. 3 tandem repeats follow at residues 70 to 129, 141 to 200, and 201 to 260. Residues 70 to 439 are repeat-rich region; the sequence is HVDANDHDQS…SHGGLDIVII (370 aa). Disordered regions lie at residues 131–157 and 173–194; these read KGGKAHRGTQNPSQDQGNSPSGKGISS and KEQTSVSGAQKGRKQGGSQSSY. Over residues 138 to 157 the composition is skewed to polar residues; it reads GTQNPSQDQGNSPSGKGISS. Positions 164–283 are interaction with EPPIN; sequence ERLWVHGLSK…NQDQQHGRKA (120 aa). The tract at residues 261-380 is 2 X 60 AA tandem repeats, type 1; that stretch reads LVYNKNQHQT…QRSIYSQTEK (120 aa). Positions 270 to 432 are disordered; the sequence is TKNLNQDQQH…KGRHQHGSHG (163 aa). Composition is skewed to polar residues over residues 308–317, 324–335, and 343–352; these read DVSQSSIYSQ, GKSQKQITIPSQ, and ANKISYQSSS. The stretch at 381–439 is one 3-2 repeat; the sequence is LVAGKSQIQAPNPKQEPWHGENAKGESGQSTNREQDLLSHEQKGRHQHGSHGGLDIVII. Basic and acidic residues predominate over residues 413–424; sequence REQDLLSHEQKG.

The protein belongs to the semenogelin family. Occurs in disulfide-linked complexes which may also contain two less abundant 71- and 76-kDa semenogelin-related polypeptides. Interacts with EPPIN (via C-terminus); Cys-239 is a critical amino acid for both binding to EPPIN. In terms of processing, transglutaminase substrate. Post-translationally, rapidly cleaved after ejaculation by KLK3/PSA, resulting in liquefaction of the semen coagulum and the progressive release of motile spermatozoa. Seminal vesicle.

The protein localises to the secreted. Its function is as follows. Predominant protein in semen. It participates in the formation of a gel matrix entrapping the accessory gland secretions and ejaculated spermatozoa. Fragments of semenogelin and/or fragments of the related proteins may contribute to the activation of progressive sperm movements as the gel-forming proteins are fragmented by KLK3/PSA. Functionally, alpha-inhibin-92 and alpha-inhibin-31, derived from the proteolytic degradation of semenogelin, inhibit the secretion of pituitary follicle-stimulating hormone. The sequence is that of Semenogelin-1 (SEMG1) from Homo sapiens (Human).